The primary structure comprises 1040 residues: Myoblast growth factor receptor egl-15 (1040 aa).

Positions 1 to 19 (MSYFLASCLGVGLLSTVSC) are cleaved as a signal peptide. Residues 20 to 525 (SLQGLTSHYR…PKIDRWTTSD (506 aa)) are Extracellular-facing. Residues 33–125 (PRFKHVANER…GQISRNFTVE (93 aa)) enclose the Ig-like C2-type 1 domain. Cys-55 and Cys-109 are joined by a disulfide. Asn-121 is a glycosylation site (N-linked (GlcNAc...) asparagine). Residues 234–257 (VHDSEESPSESRTEFINADEKENK) are compositionally biased toward basic and acidic residues. The disordered stretch occupies residues 234 to 267 (VHDSEESPSESRTEFINADEKENKEDEEEDYSVS). Asn-280 and Asn-299 each carry an N-linked (GlcNAc...) asparagine glycan. 2 consecutive Ig-like C2-type domains span residues 287 to 383 (PYFK…FHVI) and 391 to 501 (PPII…ATLT). Cys-314 and Cys-367 are disulfide-bonded. Residues Asn-401, Asn-407, Asn-433, Asn-440, Asn-449, Asn-474, and Asn-497 are each glycosylated (N-linked (GlcNAc...) asparagine). Cys-414 and Cys-485 form a disulfide bridge. The chain crosses the membrane as a helical span at residues 526-549 (YIFTTILLFLLLAATLFGILFMVC). The Cytoplasmic portion of the chain corresponds to 550 to 1040 (KQTLHKKGFM…NNNSMSKPEF (491 aa)). Positions 640-931 (LSLVHMLGEG…KTIVDYLDWM (292 aa)) constitute a Protein kinase domain. ATP is bound by residues 646 to 654 (LGEGAFGEV) and Lys-672. The Proton acceptor role is filled by Asp-797. The residue at position 828 (Tyr-828) is a Phosphotyrosine; by autocatalysis. 2 disordered regions span residues 952 to 984 (ERSTASGPVSPMESFQKKRKHRPLSAPVNLPSE) and 1021 to 1040 (TPETSQRIPSNNNSMSKPEF). Positions 1022–1040 (PETSQRIPSNNNSMSKPEF) are enriched in polar residues.

It belongs to the protein kinase superfamily. Tyr protein kinase family. Fibroblast growth factor receptor subfamily. Mg(2+) serves as cofactor. Post-translationally, activity is regulated by the phosphatase clr-1, however it is not known whether clr-1 acts directly on egl-15.

It localises to the membrane. The enzyme catalyses L-tyrosyl-[protein] + ATP = O-phospho-L-tyrosyl-[protein] + ADP + H(+). In terms of biological role, receptor tyrosine kinase required for larval development. May phosphorylate adapter protein soc-1 which in turn may result in the recruitment and/or activation of phosphatase ptp-2. May activate the Ras/MAPK kinase signaling pathway which includes sem-5, sos-1, let-60/Ras, lin-45/Raf, mek-2 and mpk-1. Acts in the hypodermis to regulate axon growth and fluid homeostasis. Activates protein degradation in muscles. Probably following interaction with ligand let-756, negatively regulates membrane protrusion from body wall muscles during larval development. Plays a role in nicotinic acetylcholine receptor (nAChR)-mediated sensitivity to nicotine. Regulates synaptic levels of nAChR subunit lev-1 in the nerve cord. Its function is as follows. Affects the maintenance of axon position without affecting axon growth. Interaction with egl-17 is required for the guidance of sex myoblast migration during gonad development. Interaction with let-756 appears to play a role in maintaining body morphology at higher temperatures. The chain is Myoblast growth factor receptor egl-15 (egl-15) from Caenorhabditis elegans.